Here is a 160-residue protein sequence, read N- to C-terminus: Small ribosomal subunit protein bS6 (160 aa).

A disordered region spans residues 100-160; the sequence is PSSVLARKSD…DDARETAGAE (61 aa). Basic and acidic residues-rich tracts occupy residues 106–116 and 136–160; these read RKSDDRGDRGN and RSSE…AGAE.

This sequence belongs to the bacterial ribosomal protein bS6 family.

Functionally, binds together with bS18 to 16S ribosomal RNA. The protein is Small ribosomal subunit protein bS6 of Gluconobacter oxydans (strain 621H) (Gluconobacter suboxydans).